Reading from the N-terminus, the 261-residue chain is Acetylglutamate kinase (261 aa).

Substrate-binding positions include 41–42 (GG), Arg-63, and Asn-157.

It belongs to the acetylglutamate kinase family. ArgB subfamily.

The protein resides in the cytoplasm. It carries out the reaction N-acetyl-L-glutamate + ATP = N-acetyl-L-glutamyl 5-phosphate + ADP. It participates in amino-acid biosynthesis; L-arginine biosynthesis; N(2)-acetyl-L-ornithine from L-glutamate: step 2/4. Functionally, catalyzes the ATP-dependent phosphorylation of N-acetyl-L-glutamate. The chain is Acetylglutamate kinase from Koribacter versatilis (strain Ellin345).